Consider the following 101-residue polypeptide: Small ribosomal subunit protein uS14 (101 aa).

Over residues 1–11 the composition is skewed to basic and acidic residues; it reads MAKKSAIETNE. Residues 1–24 form a disordered region; that stretch reads MAKKSAIETNERRRKLSQSKAAKR. The span at 12–24 shows a compositional bias: basic residues; sequence RRRKLSQSKAAKR.

This sequence belongs to the universal ribosomal protein uS14 family. Part of the 30S ribosomal subunit. Contacts proteins S3 and S10.

Binds 16S rRNA, required for the assembly of 30S particles and may also be responsible for determining the conformation of the 16S rRNA at the A site. This is Small ribosomal subunit protein uS14 from Azorhizobium caulinodans (strain ATCC 43989 / DSM 5975 / JCM 20966 / LMG 6465 / NBRC 14845 / NCIMB 13405 / ORS 571).